Consider the following 466-residue polypeptide: Ras-GEF domain-containing family member 1C (466 aa).

The tract at residues 1 to 37 (MPQTLSASDMVTPGSLSPPPTEPTDGEQAGQPLLDGA) is disordered. The N-terminal Ras-GEF domain occupies 34–164 (LDGAPSSASL…LLQALHQKLA (131 aa)). In terms of domain architecture, Ras-GEF spans 200-446 (DPYTLAQQLT…YLASYESESP (247 aa)).

Guanine nucleotide exchange factor (GEF). The polypeptide is Ras-GEF domain-containing family member 1C (RASGEF1C) (Homo sapiens (Human)).